A 194-amino-acid polypeptide reads, in one-letter code: Imidazoleglycerol-phosphate dehydratase (194 aa).

Belongs to the imidazoleglycerol-phosphate dehydratase family.

It localises to the cytoplasm. It catalyses the reaction D-erythro-1-(imidazol-4-yl)glycerol 3-phosphate = 3-(imidazol-4-yl)-2-oxopropyl phosphate + H2O. It functions in the pathway amino-acid biosynthesis; L-histidine biosynthesis; L-histidine from 5-phospho-alpha-D-ribose 1-diphosphate: step 6/9. This chain is Imidazoleglycerol-phosphate dehydratase, found in Bacillus velezensis (strain DSM 23117 / BGSC 10A6 / LMG 26770 / FZB42) (Bacillus amyloliquefaciens subsp. plantarum).